The chain runs to 491 residues: Glutamate--tRNA ligase (491 aa).

The short motif at 12 to 22 is the 'HIGH' region element; that stretch reads PSPTGTPHVGL. Residues 111-134 are disordered; it reads STPEEVEERHKAAGRDPKLGYDNF. A compositionally biased stretch (basic and acidic residues) spans 117–134; the sequence is EERHKAAGRDPKLGYDNF. A 'KMSKS' region motif is present at residues 256–260; it reads KLSKR. Lysine 259 contributes to the ATP binding site.

This sequence belongs to the class-I aminoacyl-tRNA synthetase family. Glutamate--tRNA ligase type 1 subfamily. As to quaternary structure, monomer.

The protein resides in the cytoplasm. The enzyme catalyses tRNA(Glu) + L-glutamate + ATP = L-glutamyl-tRNA(Glu) + AMP + diphosphate. Its function is as follows. Catalyzes the attachment of glutamate to tRNA(Glu) in a two-step reaction: glutamate is first activated by ATP to form Glu-AMP and then transferred to the acceptor end of tRNA(Glu). In Rhodococcus jostii (strain RHA1), this protein is Glutamate--tRNA ligase.